A 96-amino-acid chain; its full sequence is MGSGYAKKKKEAKLMERQFMEMEASLEQKRFSGEAGNGLVSVTINGKCDLVDVRIKPDCLDPEDPEVVADLFRAAFKAAKAALDSEMSAMQMGMPF.

The protein belongs to the YbaB/EbfC family. In terms of assembly, homodimer.

It is found in the cytoplasm. Its subcellular location is the nucleoid. In terms of biological role, binds to DNA and alters its conformation. May be involved in regulation of gene expression, nucleoid organization and DNA protection. The chain is Nucleoid-associated protein CT_335 from Chlamydia trachomatis serovar D (strain ATCC VR-885 / DSM 19411 / UW-3/Cx).